The following is a 147-amino-acid chain: MPTYSPKAGDVTRQWYVIDATDVVLGRLAVQAANLLRGKNKPTYAPHVDGGDFVIIINAEKVAISGNKRQDKLIHHHSGHPGGLKSRTVGQVLETRPERLVEKAVKGMIPKNKLGNAIAGKLKVYAGPNHPHAAQQPVPFEIKQVAQ.

This sequence belongs to the universal ribosomal protein uL13 family. Part of the 50S ribosomal subunit.

Functionally, this protein is one of the early assembly proteins of the 50S ribosomal subunit, although it is not seen to bind rRNA by itself. It is important during the early stages of 50S assembly. This Nocardia farcinica (strain IFM 10152) protein is Large ribosomal subunit protein uL13.